Here is an 889-residue protein sequence, read N- to C-terminus: DNA mismatch repair protein MutS (889 aa).

Residue 641–648 (GPNMAGKS) coordinates ATP.

It belongs to the DNA mismatch repair MutS family.

In terms of biological role, this protein is involved in the repair of mismatches in DNA. It is possible that it carries out the mismatch recognition step. This protein has a weak ATPase activity. The sequence is that of DNA mismatch repair protein MutS from Orientia tsutsugamushi (strain Ikeda) (Rickettsia tsutsugamushi).